An 88-amino-acid polypeptide reads, in one-letter code: Low calcium response locus protein S (88 aa).

This sequence belongs to the transposase 8 family.

The chain is Low calcium response locus protein S (lcrS) from Yersinia pestis.